Consider the following 783-residue polypeptide: Polyribonucleotide nucleotidyltransferase 1, mitochondrial (783 aa).

The transit peptide at 1-45 (MAACRYCCSCLRLRPLSDGPFLLPRRDRALTQLQVRALWSSAGSR) directs the protein to the mitochondrion. 4 positions are modified to N6-acetyllysine: lysine 250, lysine 264, lysine 285, and lysine 289. The residue at position 552 (lysine 552) is an N6-succinyllysine. The KH domain occupies 605 to 664 (PVVETVQVPLSKRAKFVGPGGYNLKKLQAETGVTISQVDEETFSVFAPTPSAMHEARDFI). An S1 motif domain is found at 679-750 (GAVYTATITE…ADGRMRLSRK (72 aa)). Serine 754 and serine 782 each carry phosphoserine.

The protein belongs to the polyribonucleotide nucleotidyltransferase family. In terms of assembly, homotrimer; in free form. Homooligomer. Component of the mitochondrial degradosome (mtEXO) complex which is a heteropentamer containing 2 copies of SUPV3L1 and 3 copies of PNPT1. As part of the mitochondrial degradosome complex, interacts with GRSF1 in an RNA-dependent manner; the interaction enhances the activity of the complex. Interacts with TCL1A; the interaction has no effect on PNPT1 exonuclease activity.

It localises to the cytoplasm. The protein resides in the mitochondrion matrix. It is found in the mitochondrion intermembrane space. It carries out the reaction RNA(n+1) + phosphate = RNA(n) + a ribonucleoside 5'-diphosphate. Functionally, RNA-binding protein implicated in numerous RNA metabolic processes. Catalyzes the phosphorolysis of single-stranded polyribonucleotides processively in the 3'-to-5' direction. Mitochondrial intermembrane factor with RNA-processing exoribonulease activity. Component of the mitochondrial degradosome (mtEXO) complex, that degrades 3' overhang double-stranded RNA with a 3'-to-5' directionality in an ATP-dependent manner. Involved in the degradation of non-coding mitochondrial transcripts (MT-ncRNA) and tRNA-like molecules. Required for correct processing and polyadenylation of mitochondrial mRNAs. Plays a role as a cytoplasmic RNA import factor that mediates the translocation of small RNA components, like the 5S RNA, the RNA subunit of ribonuclease P and the mitochondrial RNA-processing (MRP) RNA, into the mitochondrial matrix. Plays a role in mitochondrial morphogenesis and respiration; regulates the expression of the electron transport chain (ETC) components at the mRNA and protein levels. In the cytoplasm, shows a 3'-to-5' exoribonuclease mediating mRNA degradation activity; degrades c-myc mRNA upon treatment with IFNB1/IFN-beta, resulting in a growth arrest in melanoma cells. Regulates the stability of specific mature miRNAs in melanoma cells; specifically and selectively degrades miR-221, preferentially. Also plays a role in RNA cell surveillance by cleaning up oxidized RNAs. Binds to the RNA subunit of ribonuclease P, MRP RNA and miR-221 microRNA. The polypeptide is Polyribonucleotide nucleotidyltransferase 1, mitochondrial (Homo sapiens (Human)).